The primary structure comprises 397 residues: Cysteine desulfurase IscS (397 aa).

Residues 72–73 (GS), asparagine 152, glutamine 180, and 200–202 (SAH) each bind pyridoxal 5'-phosphate. N6-(pyridoxal phosphate)lysine is present on lysine 203. Residue threonine 238 coordinates pyridoxal 5'-phosphate. Cysteine 328 acts as the Cysteine persulfide intermediate in catalysis. A [2Fe-2S] cluster-binding site is contributed by cysteine 328.

This sequence belongs to the class-V pyridoxal-phosphate-dependent aminotransferase family. NifS/IscS subfamily. As to quaternary structure, homodimer. Forms a heterotetramer with IscU, interacts with other sulfur acceptors. The cofactor is pyridoxal 5'-phosphate.

Its subcellular location is the cytoplasm. It catalyses the reaction (sulfur carrier)-H + L-cysteine = (sulfur carrier)-SH + L-alanine. It functions in the pathway cofactor biosynthesis; iron-sulfur cluster biosynthesis. Functionally, master enzyme that delivers sulfur to a number of partners involved in Fe-S cluster assembly, tRNA modification or cofactor biosynthesis. Catalyzes the removal of elemental sulfur atoms from cysteine to produce alanine. Functions as a sulfur delivery protein for Fe-S cluster synthesis onto IscU, an Fe-S scaffold assembly protein, as well as other S acceptor proteins. This is Cysteine desulfurase IscS from Clostridium botulinum (strain ATCC 19397 / Type A).